The sequence spans 85 residues: UPF0410 protein YdaS (85 aa).

3 consecutive transmembrane segments (helical) span residues 2 to 22 (LSFLVSLVVAIVIGLIGSAIV), 28 to 48 (GGIFGSMIAGLIGAWIGHGLL), and 58 to 78 (FAIFPAIIGAAIFVFLLGLIF).

The protein belongs to the UPF0410 family.

It localises to the cell membrane. This Bacillus subtilis (strain 168) protein is UPF0410 protein YdaS (ydaS).